The primary structure comprises 122 residues: MSLTNEQIIEAIASKSVSEIVELITAMEEKFGVSAAAAAVAVAAGPAEAAEEKTEFDVILADAGANKVAVIKAVRGATGLGLKEAKDLVESAPAALKEGISKGEAEALKKELEEAGAKVEIK.

Belongs to the bacterial ribosomal protein bL12 family. In terms of assembly, homodimer. Part of the ribosomal stalk of the 50S ribosomal subunit. Forms a multimeric L10(L12)X complex, where L10 forms an elongated spine to which 2 to 4 L12 dimers bind in a sequential fashion. Binds GTP-bound translation factors.

Functionally, forms part of the ribosomal stalk which helps the ribosome interact with GTP-bound translation factors. Is thus essential for accurate translation. The chain is Large ribosomal subunit protein bL12 from Glaesserella parasuis serovar 5 (strain SH0165) (Haemophilus parasuis).